The sequence spans 317 residues: Melanocyte-stimulating hormone receptor (317 aa).

The Extracellular segment spans residues 1 to 37 (MSVQGPQRRLLGSVNSTSPAAPRLGLAANQTGPRCLE). N-linked (GlcNAc...) asparagine glycans are attached at residues N15 and N29. A helical membrane pass occupies residues 38-63 (VSVPDGLFLSLGLVSVVENVLVVAAI). Over 64–72 (AKNRNLHSP) the chain is Cytoplasmic. A helical transmembrane segment spans residues 73 to 93 (MYYFICCLAVSDLLVSVSSVL). The Extracellular portion of the chain corresponds to 94 to 118 (ETAVMLLLEAGTLAGRAAVVQQLDD). The helical transmembrane segment at 119–140 (IIDVLVCGAMVSSLCFLGAIAV) threads the bilayer. Residues 141 to 163 (DRYISIFYALRYHSIVTLPRAWR) lie on the Cytoplasmic side of the membrane. The helical transmembrane segment at 164–183 (AISAIWVASVLSSTLFIAYY) threads the bilayer. The Extracellular portion of the chain corresponds to 184–191 (DHTAVLLC). Residues 192 to 211 (LVSFFVAMLVLMAVLYVHML) traverse the membrane as a helical segment. The Cytoplasmic segment spans residues 212–240 (ARACQHARGIARLHKRQRPVHQGLGLKGA). Residues 241–266 (ATLTILLGIFFLCWGPFFLHLSLMVL) traverse the membrane as a helical segment. At 267 to 279 (CPRHPICGCVFKN) the chain is on the extracellular side. Residues 280-300 (FNLFLTLIICNSIVDPLIYAF) traverse the membrane as a helical segment. Residues 301–317 (RSQELRKTLREVLLCSW) lie on the Cytoplasmic side of the membrane. C315 is lipidated: S-palmitoyl cysteine.

This sequence belongs to the G-protein coupled receptor 1 family. Interacts with MGRN1, but does not undergo MGRN1-mediated ubiquitination; this interaction competes with GNAS-binding and thus inhibits agonist-induced cAMP production. Interacts with OPN3; the interaction results in a decrease in MC1R-mediated cAMP signaling and ultimately a decrease in melanin production in melanocytes.

It localises to the cell membrane. Receptor for MSH (alpha, beta and gamma) and ACTH. The activity of this receptor is mediated by G proteins which activate adenylate cyclase. Mediates melanogenesis, the production of eumelanin (black/brown) and phaeomelanin (red/yellow), via regulation of cAMP signaling in melanocytes. The sequence is that of Melanocyte-stimulating hormone receptor (MC1R) from Puma yagouaroundi (Jaguarundi).